The chain runs to 722 residues: Polyribonucleotide nucleotidyltransferase (722 aa).

2 residues coordinate Mg(2+): Asp-495 and Asp-501. A KH domain is found at 562 to 621 (PRLLSFRIDPELIGTVIGPGGRTIKGITERTNTKIDIEDGGIVTIASHDGVAAEEAQKII). Positions 631–699 (GEVFTGSITR…NRGRINLTLR (69 aa)) constitute an S1 motif domain.

Belongs to the polyribonucleotide nucleotidyltransferase family. The cofactor is Mg(2+).

It localises to the cytoplasm. The enzyme catalyses RNA(n+1) + phosphate = RNA(n) + a ribonucleoside 5'-diphosphate. Involved in mRNA degradation. Catalyzes the phosphorolysis of single-stranded polyribonucleotides processively in the 3'- to 5'-direction. In Prochlorococcus marinus (strain SARG / CCMP1375 / SS120), this protein is Polyribonucleotide nucleotidyltransferase.